The following is a 455-amino-acid chain: Exodeoxyribonuclease 7 large subunit (455 aa).

Belongs to the XseA family. Heterooligomer composed of large and small subunits.

The protein localises to the cytoplasm. The catalysed reaction is Exonucleolytic cleavage in either 5'- to 3'- or 3'- to 5'-direction to yield nucleoside 5'-phosphates.. Bidirectionally degrades single-stranded DNA into large acid-insoluble oligonucleotides, which are then degraded further into small acid-soluble oligonucleotides. This chain is Exodeoxyribonuclease 7 large subunit, found in Koribacter versatilis (strain Ellin345).